The chain runs to 401 residues: MTELAPKASPAHSIARVLVIDDSAVARGLMTRWVEEDSDLTLIGSAVDGEQGLRKAEELKPDLIVLDVEMPKMDGLAALPLLLKAVPGCKIVMASTLTRRGGEVTIRALSMGAADYASKPQAGRLAGAEEFRRDLLLKLKALAPRPIPPVPTQRDMAPSPAPATPAAPGAPVARSITPPPPPSSSAPAKKAFAPVAQPPQGRGTPRNTARPEIIAIGSSTGGPQALRDVIAAFPADVRSPIVIAQHMPALFTKILAEHLTKAGKLVCKEAEDNERLKPGCVYIAPGDFHMTIRKDAAGFYAVLDQTPPINFCRPAVDPLFQSVAEVTRGAALGIVLTGMGHDGREGARMLRSVGGTILAQDEATSVVWGMPGAVAEAGLADEILSLADMGPGIVRRAKGGN.

Positions 16–134 (RVLVIDDSAV…LAGAEEFRRD (119 aa)) constitute a Response regulatory domain. Residue aspartate 67 is modified to 4-aspartylphosphate. The interval 146–208 (PIPPVPTQRD…PQGRGTPRNT (63 aa)) is disordered. 2 stretches are compositionally biased toward low complexity: residues 166–176 (AAPGAPVARSI) and 185–199 (SAPAKKAFAPVAQPP). The CheB-type methylesterase domain maps to 205–400 (PRNTARPEII…PGIVRRAKGG (196 aa)). Active-site residues include serine 219, histidine 246, and aspartate 342.

This sequence belongs to the CheB family. Phosphorylated by CheA. Phosphorylation of the N-terminal regulatory domain activates the methylesterase activity.

It localises to the cytoplasm. It catalyses the reaction [protein]-L-glutamate 5-O-methyl ester + H2O = L-glutamyl-[protein] + methanol + H(+). It carries out the reaction L-glutaminyl-[protein] + H2O = L-glutamyl-[protein] + NH4(+). Its function is as follows. Involved in chemotaxis. Part of a chemotaxis signal transduction system that modulates chemotaxis in response to various stimuli. Catalyzes the demethylation of specific methylglutamate residues introduced into the chemoreceptors (methyl-accepting chemotaxis proteins or MCP) by CheR. Also mediates the irreversible deamidation of specific glutamine residues to glutamic acid. The polypeptide is Protein-glutamate methylesterase/protein-glutamine glutaminase (Maricaulis maris (strain MCS10) (Caulobacter maris)).